The sequence spans 86 residues: Small ribosomal subunit protein uS17 (86 aa).

This sequence belongs to the universal ribosomal protein uS17 family. As to quaternary structure, part of the 30S ribosomal subunit.

In terms of biological role, one of the primary rRNA binding proteins, it binds specifically to the 5'-end of 16S ribosomal RNA. This chain is Small ribosomal subunit protein uS17, found in Chlamydia pneumoniae (Chlamydophila pneumoniae).